The primary structure comprises 48 residues: Large ribosomal subunit protein uL14 (48 aa).

This sequence belongs to the universal ribosomal protein uL14 family.

The chain is Large ribosomal subunit protein uL14 (RPL23) from Onchocerca volvulus.